The following is a 219-amino-acid chain: Small ribosomal subunit protein uS3c (219 aa).

In terms of domain architecture, KH type-2 spans 39-118 (IRSFIRKYIQ…RLNIVITKVE (80 aa)).

This sequence belongs to the universal ribosomal protein uS3 family. Part of the 30S ribosomal subunit.

The protein resides in the plastid. This Cuscuta obtusiflora (Peruvian dodder) protein is Small ribosomal subunit protein uS3c (rps3).